A 432-amino-acid chain; its full sequence is Cyclic GMP-AMP synthase (432 aa).

A GTP-binding site is contributed by 110-115 (QGSFQY). Asp129 and Asp131 together coordinate Mg(2+). An ATP-binding site is contributed by Arg180. Asp191 lines the Mg(2+) pocket. Ser255 contributes to the ATP binding site. The GTP site is built by Lys283, Ser297, and Asp344. The tract at residues 413–432 (LNAPSKEPSSKPINKTMVSG) is disordered. A compositionally biased stretch (polar residues) spans 423 to 432 (KPINKTMVSG).

The protein belongs to the CD-NTase family. A01 subfamily. The cofactor is Mg(2+).

It catalyses the reaction GTP + ATP = 3',3'-cGAMP + 2 diphosphate. Functionally, cyclic nucleotide synthase (second messenger synthase) of a CBASS antivirus system. CBASS (cyclic oligonucleotide-based antiphage signaling system) provides immunity against bacteriophage. The CD-NTase protein synthesizes cyclic nucleotides in response to infection; these serve as specific second messenger signals. The signals activate a diverse range of effectors, leading to bacterial cell death and thus abortive phage infection. A type II-C(GA) CBASS system. Its function is as follows. Catalyzes the synthesis of 3'3'-cyclic GMP-AMP (3'3'-cGAMP) from GTP and ATP, a second messenger in cell signal transduction. Is also able to produce c-di-AMP and c-di-GMP from ATP and GTP, respectively; however, 3'3'-cGAMP is the dominant molecule produced by DncV in vivo, contrary to the 2'3'-cGAMP produced by eukaryotes. By producing cGAMP, down-regulates csgD expression and expression of flagellum regulon genes, which leads to the down-regulation of rdar biofilm formation and flagellum-mediated swimming and swarming motility in a temperature-dependent manner. Controls the activity of cGAMP-activated phospholipase CapV, a patatin-like lipase that is a direct 3',3'-cGAMP receptor encoded in the dncV operon. The protein is Cyclic GMP-AMP synthase of Escherichia coli.